A 193-amino-acid chain; its full sequence is Ion-translocating oxidoreductase complex subunit A (193 aa).

The next 6 helical transmembrane spans lie at 5 to 25, 39 to 59, 65 to 85, 102 to 122, 134 to 154, and 171 to 191; these read ILLI…FLGL, IGMG…AYLV, IPLE…AVIV, LLGI…VALL, VLYG…FAAL, and SIAL…TGLV.

This sequence belongs to the NqrDE/RnfAE family. The complex is composed of six subunits: RnfA, RnfB, RnfC, RnfD, RnfE and RnfG.

It is found in the cell inner membrane. Part of a membrane-bound complex that couples electron transfer with translocation of ions across the membrane. The polypeptide is Ion-translocating oxidoreductase complex subunit A (Actinobacillus pleuropneumoniae serotype 5b (strain L20)).